We begin with the raw amino-acid sequence, 356 residues long: Probable butyrate kinase (356 aa).

It belongs to the acetokinase family.

The protein resides in the cytoplasm. The catalysed reaction is butanoate + ATP = butanoyl phosphate + ADP. The chain is Probable butyrate kinase from Clostridium perfringens (strain SM101 / Type A).